A 289-amino-acid polypeptide reads, in one-letter code: ATP synthase subunit a (289 aa).

A run of 6 helical transmembrane segments spans residues 43–63 (AFHV…VLIF), 101–121 (SAVI…MNAV), 160–180 (LSVF…GGFI), 193–213 (LFVQ…TLIA), 232–252 (VFIL…GLGV), and 259–279 (AVFH…LTIV).

The protein belongs to the ATPase A chain family. F-type ATPases have 2 components, CF(1) - the catalytic core - and CF(0) - the membrane proton channel. CF(1) has five subunits: alpha(3), beta(3), gamma(1), delta(1), epsilon(1). CF(0) has three main subunits: a(1), b(2) and c(9-12). The alpha and beta chains form an alternating ring which encloses part of the gamma chain. CF(1) is attached to CF(0) by a central stalk formed by the gamma and epsilon chains, while a peripheral stalk is formed by the delta and b chains.

It is found in the cell inner membrane. Functionally, key component of the proton channel; it plays a direct role in the translocation of protons across the membrane. This Pseudomonas syringae pv. syringae (strain B728a) protein is ATP synthase subunit a.